The following is a 305-amino-acid chain: Glycine--tRNA ligase alpha subunit (305 aa).

Belongs to the class-II aminoacyl-tRNA synthetase family. As to quaternary structure, tetramer of two alpha and two beta subunits.

It localises to the cytoplasm. The enzyme catalyses tRNA(Gly) + glycine + ATP = glycyl-tRNA(Gly) + AMP + diphosphate. This is Glycine--tRNA ligase alpha subunit from Heliobacterium modesticaldum (strain ATCC 51547 / Ice1).